The sequence spans 417 residues: NADH-quinone oxidoreductase subunit D (417 aa).

Belongs to the complex I 49 kDa subunit family. As to quaternary structure, NDH-1 is composed of 14 different subunits. Subunits NuoB, C, D, E, F, and G constitute the peripheral sector of the complex.

Its subcellular location is the cell inner membrane. The enzyme catalyses a quinone + NADH + 5 H(+)(in) = a quinol + NAD(+) + 4 H(+)(out). In terms of biological role, NDH-1 shuttles electrons from NADH, via FMN and iron-sulfur (Fe-S) centers, to quinones in the respiratory chain. The immediate electron acceptor for the enzyme in this species is believed to be ubiquinone. Couples the redox reaction to proton translocation (for every two electrons transferred, four hydrogen ions are translocated across the cytoplasmic membrane), and thus conserves the redox energy in a proton gradient. This is NADH-quinone oxidoreductase subunit D from Methylibium petroleiphilum (strain ATCC BAA-1232 / LMG 22953 / PM1).